Consider the following 348-residue polypeptide: Dihydroorotase (348 aa).

Zn(2+)-binding residues include histidine 17 and histidine 19. Substrate contacts are provided by residues 19-21 and asparagine 45; that span reads HLR. Zn(2+)-binding residues include lysine 103, histidine 140, and histidine 178. At lysine 103 the chain carries N6-carboxylysine. Residue histidine 140 participates in substrate binding. Leucine 223 serves as a coordination point for substrate. Position 251 (aspartate 251) interacts with Zn(2+). Aspartate 251 is an active-site residue. Positions 255 and 267 each coordinate substrate.

The protein belongs to the metallo-dependent hydrolases superfamily. DHOase family. Class II DHOase subfamily. As to quaternary structure, homodimer. Zn(2+) serves as cofactor.

It carries out the reaction (S)-dihydroorotate + H2O = N-carbamoyl-L-aspartate + H(+). It functions in the pathway pyrimidine metabolism; UMP biosynthesis via de novo pathway; (S)-dihydroorotate from bicarbonate: step 3/3. Its function is as follows. Catalyzes the reversible cyclization of carbamoyl aspartate to dihydroorotate. This is Dihydroorotase from Escherichia coli O6:K15:H31 (strain 536 / UPEC).